The chain runs to 431 residues: Adenylosuccinate synthetase (431 aa).

Residues 12–18 (GDEGKGK) and 40–42 (GHT) contribute to the GTP site. D13 serves as the catalytic Proton acceptor. Positions 13 and 40 each coordinate Mg(2+). IMP is bound by residues 13–16 (DEGK), 38–41 (NAGH), T131, R145, Q225, T240, and R304. H41 serves as the catalytic Proton donor. 300–306 (VNTGRPR) is a binding site for substrate. Residues R306, 332–334 (KLD), and 414–416 (STS) contribute to the GTP site.

The protein belongs to the adenylosuccinate synthetase family. Homodimer. Mg(2+) is required as a cofactor.

The protein resides in the cytoplasm. The enzyme catalyses IMP + L-aspartate + GTP = N(6)-(1,2-dicarboxyethyl)-AMP + GDP + phosphate + 2 H(+). It participates in purine metabolism; AMP biosynthesis via de novo pathway; AMP from IMP: step 1/2. Its function is as follows. Plays an important role in the de novo pathway of purine nucleotide biosynthesis. Catalyzes the first committed step in the biosynthesis of AMP from IMP. This Rhizobium rhizogenes (strain K84 / ATCC BAA-868) (Agrobacterium radiobacter) protein is Adenylosuccinate synthetase.